The sequence spans 77 residues: MSTVEERVKKIVCEQLGVKESEVQNTSSFVEDLGADSLDTVELVMALEEEFETEIPDEEAEKLGTVQDAIDYIVAHT.

A Carrier domain is found at 2 to 77 (STVEERVKKI…DAIDYIVAHT (76 aa)). The residue at position 37 (Ser-37) is an O-(pantetheine 4'-phosphoryl)serine.

It belongs to the acyl carrier protein (ACP) family. In terms of processing, 4'-phosphopantetheine is transferred from CoA to a specific serine of apo-ACP by AcpS. This modification is essential for activity because fatty acids are bound in thioester linkage to the sulfhydryl of the prosthetic group.

The protein localises to the cytoplasm. It participates in lipid metabolism; fatty acid biosynthesis. In terms of biological role, carrier of the growing fatty acid chain in fatty acid biosynthesis. The chain is Acyl carrier protein from Marinobacter nauticus (strain ATCC 700491 / DSM 11845 / VT8) (Marinobacter aquaeolei).